The primary structure comprises 272 residues: MDNYAVFGNPIKQSKSPFIHTLFAQQTQEKIVYSAIEPATDDFKTALKDFFLEQGKGCNITAPFKEQAYQYAQQLTERAALAGAVNTLKLTDDGIIIGDNTDGAGLVLDLKNNNVTLKGSRILLIGAGGAARGVCGPLLAEHPKELIIANRTFSKAQTLTTIFTKLGNISACEFSELSGEFDLIINSTSASLHGEVPLIGTKLIRPETTIYDMMYSAQVTPFNAWAKEQGAKFILDGLGMLVGQAAESFAIWRGVKPDAKQVLNELRHHLAT.

Shikimate-binding positions include 14 to 16 (SKS) and Thr-61. Catalysis depends on Lys-65, which acts as the Proton acceptor. NADP(+) is bound at residue Glu-77. Shikimate-binding residues include Asn-86 and Asp-102. Residues 126-130 (GAGGA), 150-155 (NRTFSK), and Met-213 each bind NADP(+). Tyr-215 is a shikimate binding site. Gly-237 contacts NADP(+).

It belongs to the shikimate dehydrogenase family. Homodimer.

It catalyses the reaction shikimate + NADP(+) = 3-dehydroshikimate + NADPH + H(+). It functions in the pathway metabolic intermediate biosynthesis; chorismate biosynthesis; chorismate from D-erythrose 4-phosphate and phosphoenolpyruvate: step 4/7. Its function is as follows. Involved in the biosynthesis of the chorismate, which leads to the biosynthesis of aromatic amino acids. Catalyzes the reversible NADPH linked reduction of 3-dehydroshikimate (DHSA) to yield shikimate (SA). This is Shikimate dehydrogenase (NADP(+)) from Psychromonas ingrahamii (strain DSM 17664 / CCUG 51855 / 37).